The sequence spans 1488 residues: Chromosome partition protein MukB (1488 aa).

34-41 contacts ATP; that stretch reads GGNGAGKS. Coiled-coil stretches lie at residues 326-418, 444-472, and 509-602; these read LEAD…QYNQ, LDTF…QTAH, and RHLA…QRAP. Residues 666–783 are flexible hinge; that stretch reads PGGAEDQRLN…SLPIFGRAAR (118 aa). 3 coiled-coil regions span residues 835-923, 977-1116, and 1209-1265; these read EAEI…AKLE, EMLS…AKAG, and VEAI…LQSV. Positions 1049–1074 are disordered; the sequence is ADSGAEERARQRRDELHAQLSNNRSR. Basic and acidic residues predominate over residues 1051-1065; the sequence is SGAEERARQRRDELH.

This sequence belongs to the SMC family. MukB subfamily. Homodimerization via its hinge domain. Binds to DNA via its C-terminal region. Interacts, and probably forms a ternary complex, with MukE and MukF via its C-terminal region. The complex formation is stimulated by calcium or magnesium. Interacts with tubulin-related protein FtsZ.

It localises to the cytoplasm. The protein localises to the nucleoid. Its function is as follows. Plays a central role in chromosome condensation, segregation and cell cycle progression. Functions as a homodimer, which is essential for chromosome partition. Involved in negative DNA supercoiling in vivo, and by this means organize and compact chromosomes. May achieve or facilitate chromosome segregation by condensation DNA from both sides of a centrally located replisome during cell division. This chain is Chromosome partition protein MukB, found in Salmonella gallinarum (strain 287/91 / NCTC 13346).